The following is a 780-amino-acid chain: ATPase family gene 2 protein (780 aa).

Low complexity predominate over residues 1–23 (MAPKSSSSGSKKKSSASSNSADA). The segment at 1–26 (MAPKSSSSGSKKKSSASSNSADAKAS) is disordered. ATP-binding positions include 286–293 (GPPGTGKT) and 557–564 (GPPGCSKT).

The protein belongs to the AAA ATPase family. AFG2 subfamily. In terms of assembly, homohexamer; ATP binding induces oligomerization. Forms a ring-shaped particle of about 12 nm diameter, that displays 6-fold radial symmetry. Associates with cytoplasmic pre-60S ribosomal particles containing ARX1, ALB1, RLP24 and NOG1. Binds to pre-60S ribosomal particles soon after their export from the nucleus and is released before REI1 and LSG1 are incorporated into the particles. Hexameric form interacts with RLP24 (via C-terminal); the interaction recruits AFG2 to pre-60S ribosomal particles and promotes AFG2 ATPase activity and RLP24 release from pre-60S ribosomal particles. Interacts (via N-terminus) with nucleoporin NUP116 (via N-terminus); the interaction is required for RLP24 release from pre-60S ribosomal particles.

The protein resides in the cytoplasm. It catalyses the reaction ATP + H2O = ADP + phosphate + H(+). Its activity is regulated as follows. The hexamer is activated by RLP24 during pre-60S ribosomal particle maturation; RLP24 activates ATPase activity of both ATP-binding regions and increases cooperativity between AFG2 subunits. The second ATP-binding region is inhibited by diazaborine; the inhibition requires prior ATP binding specifically to the second ATP-binding region. In terms of biological role, ATP-dependent chaperone which uses the energy provided by ATP hydrolysis to generate mechanical force to disassemble protein complexes. Plays an essential role in the cytoplasmic maturation steps of pre-60S ribosomal particles by promoting the release of shuttling protein RLP24 from the pre-ribosomal particles. This step facilitates the subsequent release of other shuttling proteins such as NOG1 and allows the transition of the pre-ribosomal particles to later maturation forms that bind REI1. Essential for viability. The chain is ATPase family gene 2 protein from Saccharomyces cerevisiae (strain ATCC 204508 / S288c) (Baker's yeast).